A 94-amino-acid chain; its full sequence is C-C motif chemokine 26 (94 aa).

A signal peptide spans 1 to 23 (MMGLSLASAVLLASLLSLHLGTA). Cystine bridges form between cysteine 33/cysteine 57 and cysteine 34/cysteine 73.

The protein belongs to the intercrine beta (chemokine CC) family. Monomer. As to expression, ubiquitously expressed at low levels in various tissues including heart and ovary.

It localises to the secreted. Functionally, chemoattractant for eosinophils and basophils. Acts as a ligand for C-C chemokine receptor CCR3 which triggers Ca(2+) mobilization in eosinophils. Also acts as a ligand for CX3C chemokine receptor CX3CR1, inducing cell chemotaxis. This Homo sapiens (Human) protein is C-C motif chemokine 26.